We begin with the raw amino-acid sequence, 239 residues long: tRNA (guanine-N(1)-)-methyltransferase (239 aa).

S-adenosyl-L-methionine is bound by residues Gly108 and 127-132 (LGDYVL).

The protein belongs to the RNA methyltransferase TrmD family. In terms of assembly, homodimer.

The protein resides in the cytoplasm. It carries out the reaction guanosine(37) in tRNA + S-adenosyl-L-methionine = N(1)-methylguanosine(37) in tRNA + S-adenosyl-L-homocysteine + H(+). In terms of biological role, specifically methylates guanosine-37 in various tRNAs. In Streptococcus pneumoniae (strain P1031), this protein is tRNA (guanine-N(1)-)-methyltransferase.